The primary structure comprises 87 residues: Small ribosomal subunit protein uS15c (87 aa).

It belongs to the universal ribosomal protein uS15 family. In terms of assembly, part of the 30S ribosomal subunit.

Its subcellular location is the plastid. It is found in the chloroplast. The protein is Small ribosomal subunit protein uS15c (rps15) of Amborella trichopoda.